The primary structure comprises 448 residues: Trigger factor (448 aa).

The PPIase FKBP-type domain occupies 162–243 (DDFAIIDIEA…VQQTKERKLP (82 aa)). The disordered stretch occupies residues 426–448 (DEGKAVDPSEYFGEEEESAEESE). Positions 437-448 (FGEEEESAEESE) are enriched in acidic residues.

The protein belongs to the FKBP-type PPIase family. Tig subfamily.

It is found in the cytoplasm. It carries out the reaction [protein]-peptidylproline (omega=180) = [protein]-peptidylproline (omega=0). Functionally, involved in protein export. Acts as a chaperone by maintaining the newly synthesized protein in an open conformation. Functions as a peptidyl-prolyl cis-trans isomerase. The polypeptide is Trigger factor (Corynebacterium diphtheriae (strain ATCC 700971 / NCTC 13129 / Biotype gravis)).